We begin with the raw amino-acid sequence, 1154 residues long: MAVLSLVELCFISIMERMEYNNQALQKIPPQLIERLINFMVYKLPPNHLSLQTISKPIRIKLVRQNRVITMRFSIYNTIDKIIHQIYERIINEEKMEQNEKQKNSSNNNLLSLLTLNNNNQNNNSSIITTTTTTTNNNNNSNCGSSSSSSSSKQILWGSIENYGLFQQSGSFRNARWLQLDKTLAYYEIDSNETLEFKTCKSVLKIRFFGPWERVVHPLHQSTMLDETIKTFVFDESKTVSEISMELAKKLQLKYPEELSLKVQCEEEDDGRGIWLSADLTLPEQGIDPLYTIFLLKRQFFFCKDIIIDFSMDAEMLHFVFCQCLDAIIDTSHPCSPTESILFAALQCQICFGDYVHGSKEIDQIRQRDFLPMEFINQKNILKEILIQYQRLIGMSEQKAKLNYIQLAKSLKTYGYTFFKVTNRQTSIVNNNLSSSGGSGNGSGSGNGSSSSSSNSSSGNNNNHNHHNHQQLFGISSEAVLTLDPMTNNTISLYSLSNIRKWHVLNNVFTIEYNDRKDTFISMEAEAISHVLSSYIHHNLRETPSIQKQWDQNYLSVSGRNSLTNGRKRLSTCSNCSSDSMEFDSSKSNTKDKDWKYQYGLVIKKCALYIEPKKLYINPLSTQITGSMVNKELNKDTKVTKVLKVLTDLSSKMILSFSKSSPAKEREIVVKFSDKKVKSFVVDEQKTVSEITQEIGLKLGIKNPEEFSLQLIVNNKNNNNNNNSNNSSTSSSSSSSVNNSGIFDGLNNSNVNNVFYNSYIVNSSISNNSNSNSNSNILNNSNDEQSTSTSTSSSLGGIWLKPYQPLSEQSISPDSKLLFKKKFYTSDIGAADDCNSDPVYFNLLFFQSKDAIISNTYTCSKEEAIQLAATLFQINFGDHNPNIHKPGFLKSQDLKFFLPPNSLELWGLSFQKIEKSIYKEHQNLRGIKEVYAKYRYVQLCRSLKTFGAIFFSVRQLLPNKTNGSSSSSSNNNGGNSNNGINGNGIITGGNGGSGGGGSGIGGNGSGINTGGNGFGGSQQIPINQPLVLGFSRKCILFMTAKTKKFLVEYPLTHLRRWAYHKDTQCLTLDFGDYEMGRIVLQTTESEEISSYLSDYIDYIQTKLVGSQSFSRSIFNSDNNSSSFFSNSFCNNTTTTTTTTTTTTTTTTTTTTNNV.

Disordered regions lie at residues 122–149, 432–468, 715–734, 771–794, and 961–980; these read NNNS…SSSS, NLSS…NHHN, NKNN…SSSS, SNSN…TSSS, and TNGS…NNGI. FERM domains follow at residues 218-547 and 666-1103; these read PLHQ…PSIQ and REIV…QTKL. Positions 437-447 are enriched in gly residues; that stretch reads GGSGNGSGSGN. Residues 448–463 show a composition bias toward low complexity; it reads GSSSSSSNSSSGNNNN.

Key regulator of adhesion dynamics, it acts as an anti-adhesive. Plays a critical role in the regulation of cell-cell adhesion, multi-cellular development and, in particular, the formation of the organising center known as the tip. Required for turnover of paxillin-adhesion sites during cell migration. Plays a major role in normal cell shape, cell-substrate adhesion and actin cytoskeleton organization. The sequence is that of FERM domain-containing protein A (frmA) from Dictyostelium discoideum (Social amoeba).